We begin with the raw amino-acid sequence, 317 residues long: Pseudouridine-5'-phosphate glycosidase 1 (317 aa).

Glutamate 40 serves as the catalytic Proton donor. The substrate site is built by lysine 101 and valine 121. Aspartate 153 lines the Mn(2+) pocket. 155–157 (SAD) provides a ligand contact to substrate. Lysine 174 functions as the Nucleophile in the catalytic mechanism.

It belongs to the pseudouridine-5'-phosphate glycosidase family. As to quaternary structure, homotrimer. Mn(2+) is required as a cofactor.

The catalysed reaction is D-ribose 5-phosphate + uracil = psi-UMP + H2O. Catalyzes the reversible cleavage of pseudouridine 5'-phosphate (PsiMP) to ribose 5-phosphate and uracil. Functions biologically in the cleavage direction, as part of a pseudouridine degradation pathway. The chain is Pseudouridine-5'-phosphate glycosidase 1 from Rhizobium johnstonii (strain DSM 114642 / LMG 32736 / 3841) (Rhizobium leguminosarum bv. viciae).